A 253-amino-acid chain; its full sequence is Pre-mRNA-splicing factor SPF27 homolog (253 aa).

Positions 124–235 (KQYLQKNQRS…IDSFKKEAAE (112 aa)) form a coiled coil.

It belongs to the SPF27 family. As to quaternary structure, component of the multiprotein assembly MOS4-associated complex (MAC) at least composed of MOS4, CDC5 and PRL1. Interacts with CYCL1-1 and CDC5. Associated with the spliceosome. Interacts with ENY2.

The protein resides in the nucleus. Functionally, component of the MAC complex that probably regulates defense responses through transcriptional control and thereby is essential for plant innate immunity. Involved in mRNA splicing. The protein is Pre-mRNA-splicing factor SPF27 homolog (MOS4) of Arabidopsis thaliana (Mouse-ear cress).